A 309-amino-acid chain; its full sequence is Malate dehydrogenase (309 aa).

NAD(+)-binding positions include 9–14 (GAGFVG) and Asp-33. Substrate contacts are provided by Arg-82 and Arg-88. NAD(+) contacts are provided by residues Asn-95 and 118–120 (VNN). Positions 120 and 151 each coordinate substrate. Catalysis depends on His-175, which acts as the Proton acceptor.

Belongs to the LDH/MDH superfamily. MDH type 3 family.

The catalysed reaction is (S)-malate + NAD(+) = oxaloacetate + NADH + H(+). Functionally, catalyzes the reversible oxidation of malate to oxaloacetate. The protein is Malate dehydrogenase of Chloroflexus aggregans (strain MD-66 / DSM 9485).